The sequence spans 642 residues: Zinc finger protein 14 (642 aa).

A KRAB domain is found at 4 to 76; the sequence is VSFEDVAVNF…MVERLCESRR (73 aa). The C2H2-type 1 zinc finger occupies 103–125; it reads HECSFCGRDFIHHSSLNRHMRSH. The C2H2-type 2; degenerate zinc-finger motif lies at 141 to 163; sequence CKCKAVGKTFSYHHCFRKHERTH. The C2H2-type 3 zinc finger occupies 169 to 191; that stretch reads YECKQCGKAFIYYQPFQRHERTH. The C2H2-type 4; atypical zinc finger occupies 197-217; that stretch reads YECKQCGKTFIYYQSFQKHAH. 15 C2H2-type zinc fingers span residues 223-245, 251-273, 279-301, 307-329, 335-357, 363-385, 391-413, 419-441, 447-469, 475-497, 503-525, 531-553, 559-581, 587-609, and 615-637; these read YECKQCGKAFICYQSFQRHKRTH, YECKQCGKAFSCPTYFRTHERTH, YKCKECGKAFSFLSSFRRHKRTH, YECKECGKAFFYSASFRAHVIIH, YKCKECGKAFNSSNSCRVHERTH, YECKRCGKSFSWSISLRLHERTH, YECKQCHKTFSFSSSLREHETTH, YECKQCGKTFSFSSSLQRHERTH, YECKQCGKAFRCSSYFRIHERSH, YECKQCGKVFIRSSSFRLHERTH, YECKLCGKTFSFSSSLREHEKIH, FECKQCGKAFLRSSQIRLHERTH, YQCKQCGKAFISSSKFRMHERTH, YRCKQCGKAFRFSSSVRIHERSH, and YECKQCGKAFISSSHFRLHERTH.

It belongs to the krueppel C2H2-type zinc-finger protein family.

The protein localises to the nucleus. In terms of biological role, may be involved in transcriptional regulation. The sequence is that of Zinc finger protein 14 (ZNF14) from Homo sapiens (Human).